A 50-amino-acid polypeptide reads, in one-letter code: Photosystem I reaction center subunit IX (50 aa).

Residues Tyr-7–Ile-27 traverse the membrane as a helical segment.

This sequence belongs to the PsaJ family.

It is found in the plastid. The protein resides in the chloroplast thylakoid membrane. Its function is as follows. May help in the organization of the PsaE and PsaF subunits. The chain is Photosystem I reaction center subunit IX from Pinus koraiensis (Korean pine).